The following is a 1082-amino-acid chain: uncharacterized protein (1082 aa).

One can recognise a PNPLA domain in the interval 50-319 (TTMTGGVSLA…LDNRPIGVLF (270 aa)). Positions 120–124 (GTSAG) match the GXSXG motif. S122 acts as the Nucleophile in catalysis. The active-site Proton acceptor is D306. A DGA/G motif is present at residues 306–308 (DGG). Helical transmembrane passes span 959 to 979 (IARSTIIAGALLLVLGVAAAI), 982 to 1002 (VTVFGVTGLIAAGTGGLLVVL), 1012 to 1032 (LFALLSFSVVGAVLALATPVV), and 1057 to 1077 (WWHPLVVVGLIALVAIMIAAA).

The protein resides in the cell membrane. This is an uncharacterized protein from Mycobacterium tuberculosis (strain ATCC 25618 / H37Rv).